A 334-amino-acid polypeptide reads, in one-letter code: Glyoxylate reductase (334 aa).

NADP(+)-binding positions include 158–161 (FGRI), 180–182 (SRT), and 239–241 (IAR). Residues Arg-241 and Glu-270 contribute to the active site. The Proton donor role is filled by His-288. 288-290 (HIG) is an NADP(+) binding site.

Belongs to the D-isomer specific 2-hydroxyacid dehydrogenase family. GyaR subfamily. As to quaternary structure, homodimer.

Its subcellular location is the cytoplasm. The enzyme catalyses glycolate + NAD(+) = glyoxylate + NADH + H(+). In Thermococcus onnurineus (strain NA1), this protein is Glyoxylate reductase.